A 420-amino-acid polypeptide reads, in one-letter code: MHKFDLELSRRANPLLFSAERYEEYPLKYDELKQYLLSQNPSHPHHNSRPYTSIDYFDYLLYRSKNDESEIDLDKKLVSEFALYYVQKEHLNSDDLNPTLNELLKLQPKSADWYEMMLRILESINTTGIDQLTKENNNSFPNSKRARSSTNMGGTDKFNKGAYHTDKADDDKNEILQELTSFLMSNSIQKGIDIKPIPLDDPVKFLKNGINSILDTCVSLEKNTSSPPISPNAAAIQEEDSSKKLEELETAFSDLQLAHNFLTKQFENDRAEYVQDIEKLTRTNRELQDKLLNNHSNLSKTEKKLHELEQENKELEKANNKLNSSRHNFGMSSPASSPVTWDPSSPSSVGSPTSGSGSRSLSIMTSEFKKVLTSTQRKYEKELSDEREHRFKLERELALLKNAEANTSLALNRDDPPDML.

The span at 132 to 153 (LTKENNNSFPNSKRARSSTNMG) shows a compositional bias: polar residues. A disordered region spans residues 132 to 169 (LTKENNNSFPNSKRARSSTNMGGTDKFNKGAYHTDKAD). Basic and acidic residues predominate over residues 157-169 (KFNKGAYHTDKAD). A Phosphoserine modification is found at serine 230. The segment at 323 to 363 (NSSRHNFGMSSPASSPVTWDPSSPSSVGSPTSGSGSRSLSI) is disordered. Residues 325 to 339 (SRHNFGMSSPASSPV) show a composition bias toward polar residues. Residues 343 to 362 (PSSPSSVGSPTSGSGSRSLS) are compositionally biased toward low complexity.

In terms of biological role, localized to sites of polarized growth and is required for efficient mating and bipolar budding. This is Protein PEA2 (PEA2) from Saccharomyces cerevisiae (strain ATCC 204508 / S288c) (Baker's yeast).